The chain runs to 483 residues: Aspartyl/glutamyl-tRNA(Asn/Gln) amidotransferase subunit B (483 aa).

This sequence belongs to the GatB/GatE family. GatB subfamily. In terms of assembly, heterotrimer of A, B and C subunits.

The catalysed reaction is L-glutamyl-tRNA(Gln) + L-glutamine + ATP + H2O = L-glutaminyl-tRNA(Gln) + L-glutamate + ADP + phosphate + H(+). It carries out the reaction L-aspartyl-tRNA(Asn) + L-glutamine + ATP + H2O = L-asparaginyl-tRNA(Asn) + L-glutamate + ADP + phosphate + 2 H(+). Functionally, allows the formation of correctly charged Asn-tRNA(Asn) or Gln-tRNA(Gln) through the transamidation of misacylated Asp-tRNA(Asn) or Glu-tRNA(Gln) in organisms which lack either or both of asparaginyl-tRNA or glutaminyl-tRNA synthetases. The reaction takes place in the presence of glutamine and ATP through an activated phospho-Asp-tRNA(Asn) or phospho-Glu-tRNA(Gln). The sequence is that of Aspartyl/glutamyl-tRNA(Asn/Gln) amidotransferase subunit B from Rickettsia felis (strain ATCC VR-1525 / URRWXCal2) (Rickettsia azadi).